A 168-amino-acid polypeptide reads, in one-letter code: Large ribosomal subunit protein uL10 (168 aa).

It belongs to the universal ribosomal protein uL10 family. As to quaternary structure, part of the ribosomal stalk of the 50S ribosomal subunit. The N-terminus interacts with L11 and the large rRNA to form the base of the stalk. The C-terminus forms an elongated spine to which L12 dimers bind in a sequential fashion forming a multimeric L10(L12)X complex.

Forms part of the ribosomal stalk, playing a central role in the interaction of the ribosome with GTP-bound translation factors. This chain is Large ribosomal subunit protein uL10 (rplJ), found in Mycoplasmopsis pulmonis (strain UAB CTIP) (Mycoplasma pulmonis).